A 174-amino-acid polypeptide reads, in one-letter code: Pituitary tumor-transforming gene 1 protein-interacting protein (174 aa).

Residues 1–29 (MAPANLGLTPHWVMLLGAVLLLLLSGASA) form the signal peptide. Over 30 to 93 (QEPPRVGCSE…RWGVCWVNFE (64 aa)) the chain is Extracellular. A PSI domain is found at 36–89 (GCSEYTNRSCEECLRNVSCLWCNENKACMDYPVRKILPPASLCKLSSARWGVCW). Asn-42 and Asn-51 each carry an N-linked (GlcNAc...) asparagine glycan. A helical transmembrane segment spans residues 94–114 (ALIITMSVLGGSVLLGITVCC). Over 115-174 (CYCCRRKKSRKPDKSDERAMREQEERRVRQEERRAEMKSRHDEIRKKYGLFKEQNPYEKF) the chain is Cytoplasmic. Positions 125-155 (KPDKSDERAMREQEERRVRQEERRAEMKSRH) are disordered. A compositionally biased stretch (basic and acidic residues) spans 126-155 (PDKSDERAMREQEERRVRQEERRAEMKSRH). The stretch at 127-163 (DKSDERAMREQEERRVRQEERRAEMKSRHDEIRKKYG) forms a coiled coil. At Tyr-171 the chain carries Phosphotyrosine.

As to quaternary structure, interacts with PTTG1.

It localises to the cell membrane. The protein resides in the cytoplasm. Its subcellular location is the nucleus. Its function is as follows. May facilitate PTTG1 nuclear translocation. The sequence is that of Pituitary tumor-transforming gene 1 protein-interacting protein (Pttg1ip) from Mus musculus (Mouse).